A 255-amino-acid chain; its full sequence is Type III pantothenate kinase (255 aa).

Position 12–19 (12–19 (DIGNSYTK)) interacts with ATP. 109–112 (GDDL) is a substrate binding site. D111 (proton acceptor) is an active-site residue. T133 is an ATP binding site. T185 contacts substrate.

Belongs to the type III pantothenate kinase family. As to quaternary structure, homodimer. The cofactor is NH4(+). Requires K(+) as cofactor.

The protein localises to the cytoplasm. It catalyses the reaction (R)-pantothenate + ATP = (R)-4'-phosphopantothenate + ADP + H(+). It participates in cofactor biosynthesis; coenzyme A biosynthesis; CoA from (R)-pantothenate: step 1/5. Its function is as follows. Catalyzes the phosphorylation of pantothenate (Pan), the first step in CoA biosynthesis. The protein is Type III pantothenate kinase of Malacoplasma penetrans (strain HF-2) (Mycoplasma penetrans).